The primary structure comprises 939 residues: Translation initiation factor IF-2 (939 aa).

2 disordered regions span residues Leu51–Lys81 and Val137–Ala353. Basic and acidic residues predominate over residues Asn181 to Lys210. Residues Pro259 to Gly277 are compositionally biased toward low complexity. Basic and acidic residues predominate over residues Arg300–Pro312. The tr-type G domain occupies Gly437–Lys606. The interval Gly446–Thr453 is G1. Gly446 to Thr453 serves as a coordination point for GTP. A G2 region spans residues Gly471 to His475. The segment at Asp492 to Gly495 is G3. GTP-binding positions include Asp492–His496 and Asn546–Asp549. The segment at Asn546–Asp549 is G4. The G5 stretch occupies residues Ser582 to Lys584.

This sequence belongs to the TRAFAC class translation factor GTPase superfamily. Classic translation factor GTPase family. IF-2 subfamily.

It is found in the cytoplasm. Its function is as follows. One of the essential components for the initiation of protein synthesis. Protects formylmethionyl-tRNA from spontaneous hydrolysis and promotes its binding to the 30S ribosomal subunits. Also involved in the hydrolysis of GTP during the formation of the 70S ribosomal complex. In Desulfotalea psychrophila (strain LSv54 / DSM 12343), this protein is Translation initiation factor IF-2.